The following is a 167-amino-acid chain: Lipoprotein signal peptidase (167 aa).

The next 4 membrane-spanning stretches (helical) occupy residues 8–28 (TFLT…VVLL), 46–66 (WGHF…FGLF), 68–88 (QYKI…ALFL), and 101–121 (VALT…LLYG). Catalysis depends on residues aspartate 125 and aspartate 143. The helical transmembrane segment at 139–159 (FNLADAFISIGTLLLIGHLYF) threads the bilayer.

It belongs to the peptidase A8 family.

The protein localises to the cell inner membrane. It catalyses the reaction Release of signal peptides from bacterial membrane prolipoproteins. Hydrolyzes -Xaa-Yaa-Zaa-|-(S,diacylglyceryl)Cys-, in which Xaa is hydrophobic (preferably Leu), and Yaa (Ala or Ser) and Zaa (Gly or Ala) have small, neutral side chains.. The protein operates within protein modification; lipoprotein biosynthesis (signal peptide cleavage). This protein specifically catalyzes the removal of signal peptides from prolipoproteins. The polypeptide is Lipoprotein signal peptidase (Chlamydia trachomatis serovar A (strain ATCC VR-571B / DSM 19440 / HAR-13)).